A 342-amino-acid chain; its full sequence is Glycerol-3-phosphate dehydrogenase [NAD(P)+] (342 aa).

NADPH is bound by residues Ser13, Trp14, and Lys108. Residues Lys108, Gly139, and Ser141 each coordinate sn-glycerol 3-phosphate. Ala143 contacts NADPH. Sn-glycerol 3-phosphate contacts are provided by Lys194, Asp247, Ser257, Arg258, and Asn259. Lys194 (proton acceptor) is an active-site residue. NADPH is bound at residue Arg258. 2 residues coordinate NADPH: Val282 and Glu284.

It belongs to the NAD-dependent glycerol-3-phosphate dehydrogenase family.

The protein localises to the cytoplasm. The enzyme catalyses sn-glycerol 3-phosphate + NAD(+) = dihydroxyacetone phosphate + NADH + H(+). It carries out the reaction sn-glycerol 3-phosphate + NADP(+) = dihydroxyacetone phosphate + NADPH + H(+). It participates in membrane lipid metabolism; glycerophospholipid metabolism. Functionally, catalyzes the reduction of the glycolytic intermediate dihydroxyacetone phosphate (DHAP) to sn-glycerol 3-phosphate (G3P), the key precursor for phospholipid synthesis. This Lactococcus lactis subsp. cremoris (strain SK11) protein is Glycerol-3-phosphate dehydrogenase [NAD(P)+].